The sequence spans 164 residues: ATP synthase subunit b 1 (164 aa).

Residues 4-24 (MELAELWVAVAFFVFVGILLY) traverse the membrane as a helical segment.

Belongs to the ATPase B chain family. In terms of assembly, F-type ATPases have 2 components, F(1) - the catalytic core - and F(0) - the membrane proton channel. F(1) has five subunits: alpha(3), beta(3), gamma(1), delta(1), epsilon(1). F(0) has three main subunits: a(1), b(2) and c(10-14). The alpha and beta chains form an alternating ring which encloses part of the gamma chain. F(1) is attached to F(0) by a central stalk formed by the gamma and epsilon chains, while a peripheral stalk is formed by the delta and b chains.

Its subcellular location is the cell inner membrane. F(1)F(0) ATP synthase produces ATP from ADP in the presence of a proton or sodium gradient. F-type ATPases consist of two structural domains, F(1) containing the extramembraneous catalytic core and F(0) containing the membrane proton channel, linked together by a central stalk and a peripheral stalk. During catalysis, ATP synthesis in the catalytic domain of F(1) is coupled via a rotary mechanism of the central stalk subunits to proton translocation. In terms of biological role, component of the F(0) channel, it forms part of the peripheral stalk, linking F(1) to F(0). The protein is ATP synthase subunit b 1 of Azorhizobium caulinodans (strain ATCC 43989 / DSM 5975 / JCM 20966 / LMG 6465 / NBRC 14845 / NCIMB 13405 / ORS 571).